Consider the following 160-residue polypeptide: Cyclic di-GMP-binding protein Smlt4090 (160 aa).

5 residues coordinate 3',3'-c-di-GMP: Lys33, Lys132, Arg134, Asp135, and Asp160.

Belongs to the YajQ family.

Functionally, cyclic di-GMP effector that significantly contributes to virulence. Binds bis-(3',5')-cyclic diguanylate (cyclic di-GMP or c-di-GMP), an important bacterial second messenger that controls a wide range of cellular processes. The protein is Cyclic di-GMP-binding protein Smlt4090 of Stenotrophomonas maltophilia (strain K279a).